An 846-amino-acid polypeptide reads, in one-letter code: DNA mismatch repair protein MutS (846 aa).

610–617 (GPNMGGKS) is an ATP binding site.

It belongs to the DNA mismatch repair MutS family.

Its function is as follows. This protein is involved in the repair of mismatches in DNA. It is possible that it carries out the mismatch recognition step. This protein has a weak ATPase activity. In Legionella pneumophila (strain Paris), this protein is DNA mismatch repair protein MutS.